We begin with the raw amino-acid sequence, 162 residues long: Peptide deformylase-like (162 aa).

This sequence belongs to the polypeptide deformylase family.

The polypeptide is Peptide deformylase-like (Staphylococcus aureus (strain COL)).